We begin with the raw amino-acid sequence, 428 residues long: Oxysterol-binding protein 9 (428 aa).

The span at 1 to 11 (MTEVQSITTSG) shows a compositional bias: polar residues. Disordered stretches follow at residues 1-32 (MTEVQSITTSGEIKMPLSPSSSSSSISSSTTN) and 396-428 (ALIEDNQRKQKKEKDEKLKKDEKLKKEDKKNQK). A compositionally biased stretch (low complexity) spans 18–32 (SPSSSSSSISSSTTN). Positions 389-422 (EEAKKYKALIEDNQRKQKKEKDEKLKKDEKLKKE) form a coiled coil.

This sequence belongs to the OSBP family.

This Dictyostelium discoideum (Social amoeba) protein is Oxysterol-binding protein 9 (osbI).